We begin with the raw amino-acid sequence, 409 residues long: uncharacterized protein (409 aa).

12 helical membrane-spanning segments follow: residues 3–23 (IIVK…PTTE), 43–63 (ITQI…LSLG), 73–93 (PIVL…IFSV), 95–115 (IEML…GSVI), 135–155 (ILSP…GYII), 162–182 (YVFV…YKIL), 209–229 (ILWL…GFFI), 248–268 (KLAF…GYLI), 283–303 (FIFS…LEFI), 309–329 (LAIS…SLLI), 346–366 (TAGS…TYCV), and 379–399 (LLCL…CILY).

It belongs to the major facilitator superfamily. Bcr/CmlA family.

It is found in the cell inner membrane. This is an uncharacterized protein from Rickettsia typhi (strain ATCC VR-144 / Wilmington).